Consider the following 355-residue polypeptide: Phosphoribosylformylglycinamidine cyclo-ligase (355 aa).

It belongs to the AIR synthase family.

It is found in the cytoplasm. It carries out the reaction 2-formamido-N(1)-(5-O-phospho-beta-D-ribosyl)acetamidine + ATP = 5-amino-1-(5-phospho-beta-D-ribosyl)imidazole + ADP + phosphate + H(+). Its pathway is purine metabolism; IMP biosynthesis via de novo pathway; 5-amino-1-(5-phospho-D-ribosyl)imidazole from N(2)-formyl-N(1)-(5-phospho-D-ribosyl)glycinamide: step 2/2. In Paraburkholderia phytofirmans (strain DSM 17436 / LMG 22146 / PsJN) (Burkholderia phytofirmans), this protein is Phosphoribosylformylglycinamidine cyclo-ligase.